The primary structure comprises 161 residues: NADH-quinone oxidoreductase subunit I (161 aa).

2 4Fe-4S ferredoxin-type domains span residues 52–82 (LRRY…IESE) and 92–121 (KRYD…ETRV). Residues Cys-62, Cys-65, Cys-68, Cys-72, Cys-101, Cys-104, Cys-107, and Cys-111 each contribute to the [4Fe-4S] cluster site.

This sequence belongs to the complex I 23 kDa subunit family. NDH-1 is composed of 14 different subunits. Subunits NuoA, H, J, K, L, M, N constitute the membrane sector of the complex. It depends on [4Fe-4S] cluster as a cofactor.

It is found in the cell inner membrane. It catalyses the reaction a quinone + NADH + 5 H(+)(in) = a quinol + NAD(+) + 4 H(+)(out). In terms of biological role, NDH-1 shuttles electrons from NADH, via FMN and iron-sulfur (Fe-S) centers, to quinones in the respiratory chain. The immediate electron acceptor for the enzyme in this species is believed to be ubiquinone. Couples the redox reaction to proton translocation (for every two electrons transferred, four hydrogen ions are translocated across the cytoplasmic membrane), and thus conserves the redox energy in a proton gradient. This Aromatoleum aromaticum (strain DSM 19018 / LMG 30748 / EbN1) (Azoarcus sp. (strain EbN1)) protein is NADH-quinone oxidoreductase subunit I.